The chain runs to 860 residues: Leucine--tRNA ligase (860 aa).

Positions 42–52 (PYPSGRLHMGH) match the 'HIGH' region motif. The short motif at 619-623 (KMSKS) is the 'KMSKS' region element. ATP is bound at residue lysine 622.

It belongs to the class-I aminoacyl-tRNA synthetase family.

Its subcellular location is the cytoplasm. It catalyses the reaction tRNA(Leu) + L-leucine + ATP = L-leucyl-tRNA(Leu) + AMP + diphosphate. The polypeptide is Leucine--tRNA ligase (Escherichia coli (strain ATCC 8739 / DSM 1576 / NBRC 3972 / NCIMB 8545 / WDCM 00012 / Crooks)).